The chain runs to 272 residues: Proteasome subunit beta type-5 (272 aa).

Residues 1-55 constitute a propeptide, removed in mature form; sequence MKLDTSGLESTAPIFRRSDFVFDGLQMTPSFDLPNPTDFDGFQKEAVQMVKPAKG. The Nucleophile role is filled by Thr-56.

This sequence belongs to the peptidase T1B family. In terms of assembly, the 26S proteasome consists of a 20S proteasome core and two 19S regulatory subunits. The 20S proteasome core is composed of 28 subunits that are arranged in four stacked rings, resulting in a barrel-shaped structure. The two end rings are each formed by seven alpha subunits, and the two central rings are each formed by seven beta subunits. The catalytic chamber with the active sites is on the inside of the barrel.

The protein resides in the cytoplasm. It is found in the nucleus. The catalysed reaction is Cleavage of peptide bonds with very broad specificity.. Functionally, the proteasome is a multicatalytic proteinase complex which is characterized by its ability to cleave peptides with Arg, Phe, Tyr, Leu, and Glu adjacent to the leaving group at neutral or slightly basic pH. The proteasome has an ATP-dependent proteolytic activity. This Spinacia oleracea (Spinach) protein is Proteasome subunit beta type-5.